Reading from the N-terminus, the 447-residue chain is N-succinylarginine dihydrolase (447 aa).

Residues 19–28, Asn110, and 137–138 each bind substrate; these read AGLSFGNEAS and HR. Residue Glu174 is part of the active site. Arg212 contacts substrate. Residue His248 is part of the active site. Substrate is bound by residues Asp250 and Asn359. Cys365 functions as the Nucleophile in the catalytic mechanism.

The protein belongs to the succinylarginine dihydrolase family. In terms of assembly, homodimer.

It carries out the reaction N(2)-succinyl-L-arginine + 2 H2O + 2 H(+) = N(2)-succinyl-L-ornithine + 2 NH4(+) + CO2. It participates in amino-acid degradation; L-arginine degradation via AST pathway; L-glutamate and succinate from L-arginine: step 2/5. Its function is as follows. Catalyzes the hydrolysis of N(2)-succinylarginine into N(2)-succinylornithine, ammonia and CO(2). The sequence is that of N-succinylarginine dihydrolase from Escherichia coli O8 (strain IAI1).